A 49-amino-acid polypeptide reads, in one-letter code: MRVGITLACTECKNRNYASIKNKKNNPDRLEVKKYCKFCKSHTAHKETK.

Belongs to the bacterial ribosomal protein bL33 family.

The chain is Large ribosomal subunit protein bL33 from Desulfitobacterium hafniense (strain Y51).